Reading from the N-terminus, the 457-residue chain is MVRLYNTLTKKKELFTPIDKDHVKMYVCGPTVYDTAHIGNARSVVVYDVLFQLLKFCYGKVTYVRNITDIDDKIINAASEKNSNIESISTYYTKAFHEDMRSINCAEPTHEPKATKNVDYIIKLIEHLLQSGHAYESDKHVYFNIESYHEYGALSGKKTDELVPGSRVEVNENKKHPGDFVLWKPANDIDYKLSSYWNSPWGEGRPGWHIECSAMSYAYLGKDFDIHGGGIDLQFPHHENEIAQSKSAFAGSMFAKYWIHNGFLTVNEEKMSKSLFNIVKVRDLLDSGIKGEVIRYALLKTHYRKPLDWTENVISDAQETLNKFYRLSRGLDTINIDESNAEISKDFIDALKNDLNIPEALAILHEMAAKINKMSNESEKLKLTESFVKSARFIGLLESSYEKWFAVDVNHQEIERLIDLRKIAKKNKNYDTADKIRDQLKQMGITISDNEDGTTTW.

Position 28 (Cys-28) interacts with Zn(2+). Residues 30–40 carry the 'HIGH' region motif; the sequence is PTVYDTAHIGN. Zn(2+)-binding residues include Cys-212, His-237, and Glu-241. A 'KMSKS' region motif is present at residues 270–274; that stretch reads KMSKS. Residue Lys-273 participates in ATP binding.

Belongs to the class-I aminoacyl-tRNA synthetase family. In terms of assembly, monomer. The cofactor is Zn(2+).

The protein localises to the cytoplasm. It carries out the reaction tRNA(Cys) + L-cysteine + ATP = L-cysteinyl-tRNA(Cys) + AMP + diphosphate. The polypeptide is Cysteine--tRNA ligase (Wolbachia pipientis wMel).